The chain runs to 477 residues: Trigger factor (477 aa).

A PPIase FKBP-type domain is found at E163–V248. A compositionally biased stretch (basic and acidic residues) spans K408 to P461. Residues K408 to K477 form a disordered region.

Belongs to the FKBP-type PPIase family. Tig subfamily.

The protein localises to the cytoplasm. It catalyses the reaction [protein]-peptidylproline (omega=180) = [protein]-peptidylproline (omega=0). Involved in protein export. Acts as a chaperone by maintaining the newly synthesized protein in an open conformation. Functions as a peptidyl-prolyl cis-trans isomerase. This chain is Trigger factor, found in Pelagibacter ubique (strain HTCC1062).